The sequence spans 283 residues: 5'-nucleotidase SurE 2 (283 aa).

Residues Asp-19, Asp-20, Ser-52, and Asn-110 each contribute to the a divalent metal cation site.

This sequence belongs to the SurE nucleotidase family. The cofactor is a divalent metal cation.

Its subcellular location is the cytoplasm. The enzyme catalyses a ribonucleoside 5'-phosphate + H2O = a ribonucleoside + phosphate. In terms of biological role, nucleotidase that shows phosphatase activity on nucleoside 5'-monophosphates. The polypeptide is 5'-nucleotidase SurE 2 (Chlamydia caviae (strain ATCC VR-813 / DSM 19441 / 03DC25 / GPIC) (Chlamydophila caviae)).